The sequence spans 37 residues: Large ribosomal subunit protein bL36 (37 aa).

The protein belongs to the bacterial ribosomal protein bL36 family.

This Colwellia psychrerythraea (strain 34H / ATCC BAA-681) (Vibrio psychroerythus) protein is Large ribosomal subunit protein bL36.